We begin with the raw amino-acid sequence, 93 residues long: Class II hydrophobin 1 (93 aa).

A signal peptide spans 1–16; the sequence is MKFFAVAALFVASAMA. Cystine bridges form between Cys24–Cys74, Cys35–Cys65, Cys36–Cys48, and Cys75–Cys86.

It belongs to the cerato-ulmin hydrophobin family. As to quaternary structure, interacts with maize ubiquilin 1-like (UBL) protein. Homotetramer. Further self-assembles to form highly ordered films at water-air interfaces through intermolecular interactions.

It localises to the cell membrane. Aerial growth, conidiation, and dispersal of filamentous fungi in the environment rely upon a capability of their secreting small amphipathic proteins called hydrophobins (HPBs) with low sequence identity. Class I can self-assemble into an outermost layer of rodlet bundles on aerial cell surfaces, conferring cellular hydrophobicity that supports fungal growth, development and dispersal; whereas Class II form highly ordered films at water-air interfaces through intermolecular interactions but contribute nothing to the rodlet structure. Hyd1 is a class II hydrophobin that acts as an elicitor of induced systemic resistance (ISR) in plants. During interaction with the plant, binds with the maize target protein UBL in order to recruit more UBL proteins in maize roots to elicit plant defense responses, including cell death as well as brassinosteroid, jasmonate (JA) and ethylene (ET) signaling. This Trichoderma harzianum (Hypocrea lixii) protein is Class II hydrophobin 1.